The chain runs to 278 residues: Large ribosomal subunit protein uL2 (278 aa).

A compositionally biased stretch (basic residues) spans 210–219 (RKRWLGKRPQ). The segment at 210 to 278 (RKRWLGKRPQ…LIIRHRKGSK (69 aa)) is disordered. Basic and acidic residues predominate over residues 258 to 270 (KTRDVKKASEKLI).

The protein belongs to the universal ribosomal protein uL2 family. As to quaternary structure, part of the 50S ribosomal subunit. Forms a bridge to the 30S subunit in the 70S ribosome.

One of the primary rRNA binding proteins. Required for association of the 30S and 50S subunits to form the 70S ribosome, for tRNA binding and peptide bond formation. It has been suggested to have peptidyltransferase activity; this is somewhat controversial. Makes several contacts with the 16S rRNA in the 70S ribosome. This is Large ribosomal subunit protein uL2 from Lactobacillus acidophilus (strain ATCC 700396 / NCK56 / N2 / NCFM).